The sequence spans 327 residues: Glycerol-3-phosphate dehydrogenase [NAD(P)+] (327 aa).

NADPH contacts are provided by Trp-15, Arg-35, and Lys-109. Lys-109, Gly-137, and Ser-139 together coordinate sn-glycerol 3-phosphate. Ala-141 serves as a coordination point for NADPH. The sn-glycerol 3-phosphate site is built by Lys-192, Asp-245, Ser-255, Arg-256, and Asn-257. Lys-192 functions as the Proton acceptor in the catalytic mechanism. Arg-256 contacts NADPH. Leu-275 and Glu-277 together coordinate NADPH.

Belongs to the NAD-dependent glycerol-3-phosphate dehydrogenase family.

It localises to the cytoplasm. The catalysed reaction is sn-glycerol 3-phosphate + NAD(+) = dihydroxyacetone phosphate + NADH + H(+). It catalyses the reaction sn-glycerol 3-phosphate + NADP(+) = dihydroxyacetone phosphate + NADPH + H(+). It participates in membrane lipid metabolism; glycerophospholipid metabolism. In terms of biological role, catalyzes the reduction of the glycolytic intermediate dihydroxyacetone phosphate (DHAP) to sn-glycerol 3-phosphate (G3P), the key precursor for phospholipid synthesis. The chain is Glycerol-3-phosphate dehydrogenase [NAD(P)+] from Chelativorans sp. (strain BNC1).